Here is a 511-residue protein sequence, read N- to C-terminus: Ribose import ATP-binding protein RbsA (511 aa).

2 consecutive ABC transporter domains span residues 7–242 (LQIS…VGRE) and 256–500 (CSTT…SGTQ). 39–46 (GENGAGKS) serves as a coordination point for ATP.

It belongs to the ABC transporter superfamily. Ribose importer (TC 3.A.1.2.1) family. As to quaternary structure, the complex is composed of an ATP-binding protein (RbsA), two transmembrane proteins (RbsC) and a solute-binding protein (RbsB).

It localises to the cell inner membrane. It carries out the reaction D-ribose(out) + ATP + H2O = D-ribose(in) + ADP + phosphate + H(+). Its function is as follows. Part of the ABC transporter complex RbsABC involved in ribose import. Responsible for energy coupling to the transport system. The protein is Ribose import ATP-binding protein RbsA of Ruegeria sp. (strain TM1040) (Silicibacter sp.).